Reading from the N-terminus, the 427-residue chain is MTEAMKITLSTQPADARWGDKATYSINNDGITLHLNGKDDLGLIQRAARKIDGLGIKQVALTGEGWDTERCWAFWAGYKGPKGVRTVMWPDLDDAQRQELDNRLTIIDWVRDTINAPAEELGPEQLAQRAVDLLCSVACDSVTYRITKGEDLREQNYMGLHTVGRGSERPPVLLALDYNPTGDKDAPVYACLVGKGITFDSGGYSIKQSAFMDSMKSDMGGAATVTGALAFAITRGLNKRVKLFLCCADNLISGNAFKLGDIIRYRNGKNAEVMNTDAEGRLVLADGLIDASAQHPQLIIDMATLTGAAKTALGNDYHALFSFDDTLAGRLLTSAAQENEPFWRLPLAEFHRNQLPSNFAELNNTGSAAYPAGASTAAGFLSHFVENYREGWLHIDCSATYRKAPVEQWAAGATGLGVRTIANLLTA.

The Mn(2+) site is built by Lys-195 and Asp-200. Lys-207 is an active-site residue. Residues Asp-218, Asp-277, and Glu-279 each coordinate Mn(2+). Residue Arg-281 is part of the active site.

This sequence belongs to the peptidase M17 family. Homohexamer. Requires Mn(2+) as cofactor.

Its subcellular location is the cytoplasm. It carries out the reaction Release of an N-terminal amino acid, Xaa, from a peptide or arylamide. Xaa is preferably Glu or Asp but may be other amino acids, including Leu, Met, His, Cys and Gln.. Probably plays an important role in intracellular peptide degradation. This is Peptidase B from Salmonella choleraesuis (strain SC-B67).